Here is a 338-residue protein sequence, read N- to C-terminus: Nicotinate-nucleotide--dimethylbenzimidazole phosphoribosyltransferase (338 aa).

E305 functions as the Proton acceptor in the catalytic mechanism.

Belongs to the CobT family.

It carries out the reaction 5,6-dimethylbenzimidazole + nicotinate beta-D-ribonucleotide = alpha-ribazole 5'-phosphate + nicotinate + H(+). It functions in the pathway nucleoside biosynthesis; alpha-ribazole biosynthesis; alpha-ribazole from 5,6-dimethylbenzimidazole: step 1/2. Catalyzes the synthesis of alpha-ribazole-5'-phosphate from nicotinate mononucleotide (NAMN) and 5,6-dimethylbenzimidazole (DMB). The protein is Nicotinate-nucleotide--dimethylbenzimidazole phosphoribosyltransferase of Rhizobium johnstonii (strain DSM 114642 / LMG 32736 / 3841) (Rhizobium leguminosarum bv. viciae).